We begin with the raw amino-acid sequence, 367 residues long: UDP-N-acetylenolpyruvoylglucosamine reductase 2 (367 aa).

An FAD-binding PCMH-type domain is found at 31–198 (IGGKPRSAVR…LAIELQLLTD (168 aa)). Arg-176 is a catalytic residue. Ser-256 (proton donor) is an active-site residue. Glu-357 is a catalytic residue.

The protein belongs to the MurB family. Requires FAD as cofactor.

The protein localises to the cytoplasm. It carries out the reaction UDP-N-acetyl-alpha-D-muramate + NADP(+) = UDP-N-acetyl-3-O-(1-carboxyvinyl)-alpha-D-glucosamine + NADPH + H(+). Its pathway is cell wall biogenesis; peptidoglycan biosynthesis. Cell wall formation. The polypeptide is UDP-N-acetylenolpyruvoylglucosamine reductase 2 (murB2) (Corynebacterium glutamicum (strain ATCC 13032 / DSM 20300 / JCM 1318 / BCRC 11384 / CCUG 27702 / LMG 3730 / NBRC 12168 / NCIMB 10025 / NRRL B-2784 / 534)).